The primary structure comprises 221 residues: Probable septum site-determining protein MinC (221 aa).

It belongs to the MinC family. Interacts with MinD and FtsZ.

In terms of biological role, cell division inhibitor that blocks the formation of polar Z ring septums. Rapidly oscillates between the poles of the cell to destabilize FtsZ filaments that have formed before they mature into polar Z rings. Prevents FtsZ polymerization. This chain is Probable septum site-determining protein MinC, found in Shewanella baltica (strain OS223).